Consider the following 59-residue polypeptide: Potassium channel toxin alpha-KTx 1.2 (59 aa).

A signal peptide spans 1–22 (MKILSVLLLALIICSIIDWSEG). Pyrrolidone carboxylic acid is present on Gln-23. Disulfide bonds link Cys-29/Cys-50, Cys-35/Cys-55, and Cys-39/Cys-57. Residues 48-55 (GKCMNKKC) are interaction with Ca(2+)-activated K(+) channels.

It belongs to the short scorpion toxin superfamily. Potassium channel inhibitor family. Alpha-KTx 01 subfamily. In terms of tissue distribution, expressed by the venom gland.

Its subcellular location is the secreted. Functionally, blocks calcium-activated potassium channels (Kd=43 nM on KCa1.1/KCNMA1). Has a potent presynaptic facilitatory action, with less effect on direct muscle stimulation. This is Potassium channel toxin alpha-KTx 1.2 from Leiurus hebraeus (Hebrew deathstalker scorpion).